A 519-amino-acid polypeptide reads, in one-letter code: Cyclic AMP-responsive element-binding protein 3-like protein 2 (519 aa).

At 1–374 the chain is on the cytoplasmic side; the sequence is MEIMDSGEPF…SCRVTGTQTS (374 aa). 3 disordered regions span residues 58–77, 85–121, and 193–261; these read GRGD…PVPP, YSLC…MEQE, and GLEC…SGPL. Residues 109–119 are compositionally biased toward acidic residues; the sequence is ADSESDEWPME. Low complexity-rich tracts occupy residues 205-217 and 240-249; these read SSVG…SQSP and PSSLSSSPLL. Positions 291–354 constitute a bZIP domain; the sequence is ALKKIRRKIK…KSLLQQLHSL (64 aa). Residues 293 to 322 form a basic motif region; that stretch reads KKIRRKIKNKISAQESRRKKKEYVDALEKK. A leucine-zipper region spans residues 333–354; the sequence is LRRKVENLECTNKSLLQQLHSL. The helical; Signal-anchor for type II membrane protein transmembrane segment at 375 to 395 threads the bilayer; sequence TCLMVVVLCFSLFLGSFYPGL. Topologically, residues 396 to 519 are lumenal; that stretch reads SPCSSITKAD…QLDRTVNETS (124 aa). The S1P recognition signature appears at 423 to 426; sequence RSLL. N-linked (GlcNAc...) asparagine glycans are attached at residues N485, N503, and N516.

It belongs to the bZIP family. ATF subfamily. As to quaternary structure, binds DNA as a dimer. In terms of processing, upon ER stress, translocated to the Golgi apparatus, where it is processed by regulated intramembrane proteolysis (RIP) to release the cytosol-facing N-terminal transcription factor domain. The cleavage is performed sequentially by site-1 and site-2 proteases (S1P/mbtps1 and S2P/mbtps2).

It localises to the endoplasmic reticulum membrane. It is found in the nucleus. Its function is as follows. Transcription factor involved in unfolded protein response (UPR). In the absence of endoplasmic reticulum (ER) stress, inserted into ER membranes, with N-terminal DNA-binding and transcription activation domains oriented toward the cytosolic face of the membrane. In response to ER stress, transported to the Golgi, where it is cleaved in a site-specific manner by resident proteases S1P/mbtps1 and S2P/mbtps2. The released N-terminal cytosolic domain is translocated to the nucleus to effect transcription of specific target genes. Plays a critical role in chondrogenesis. May protect neuroblastoma cells from ER stress-induced death. In vitro activates transcription of target genes via direct binding to the CRE site. In Danio rerio (Zebrafish), this protein is Cyclic AMP-responsive element-binding protein 3-like protein 2 (creb3l2).